A 273-amino-acid chain; its full sequence is Undecaprenyl-diphosphatase (273 aa).

7 helical membrane passes run 45–65 (AKTF…VMFW), 90–110 (LTLI…LIFH), 116–136 (LFNP…LIAA), 154–173 (YRQA…PGFS), 190–210 (YAAS…ATAL), 222–242 (ADFP…LVAI), and 252–272 (ISFI…YVVF).

It belongs to the UppP family.

The protein localises to the cell inner membrane. The catalysed reaction is di-trans,octa-cis-undecaprenyl diphosphate + H2O = di-trans,octa-cis-undecaprenyl phosphate + phosphate + H(+). In terms of biological role, catalyzes the dephosphorylation of undecaprenyl diphosphate (UPP). Confers resistance to bacitracin. The sequence is that of Undecaprenyl-diphosphatase from Enterobacter sp. (strain 638).